A 547-amino-acid polypeptide reads, in one-letter code: Serine beta-lactamase-like protein LACTB, mitochondrial (547 aa).

Residues 1–115 (MYRLMSAVTA…RAIESSRDLL (115 aa)) constitute a mitochondrion transit peptide. The span at 62–83 (GAAPAQSPAAPDPEASPLAEPP) shows a compositional bias: low complexity. Residues 62–96 (GAAPAQSPAAPDPEASPLAEPPQEQSLAPWSPQTP) form a disordered region. The active-site Acyl-ester intermediate is Ser164. Residues Lys283 and Lys284 each carry the N6-succinyllysine modification. 2 positions are modified to N6-acetyllysine: Lys297 and Lys342.

The protein belongs to the peptidase S12 family. As to expression, expressed predominantly in skeletal muscle.

The protein localises to the mitochondrion. Its function is as follows. Mitochondrial serine protease that acts as a regulator of mitochondrial lipid metabolism. Acts by decreasing protein levels of PISD, a mitochondrial enzyme that converts phosphatidylserine (PtdSer) to phosphatidylethanolamine (PtdEtn), thereby affecting mitochondrial lipid metabolism. It is unclear whether it acts directly by mediating proteolysis of PISD or by mediating proteolysis of another lipid metabolism protein. Acts as a tumor suppressor that has the ability to inhibit proliferation of multiple types of breast cancer cells: probably by promoting decreased levels of PISD, thereby affecting mitochondrial lipid metabolism. The protein is Serine beta-lactamase-like protein LACTB, mitochondrial of Homo sapiens (Human).